Reading from the N-terminus, the 356-residue chain is Dihydroorotate dehydrogenase (quinone) (356 aa).

Residues Pro-67 to Lys-71 and Thr-91 contribute to the FMN site. Substrate is bound at residue Lys-71. Asn-116–Phe-120 provides a ligand contact to substrate. Asn-147 and Asn-178 together coordinate FMN. Asn-178 provides a ligand contact to substrate. Ser-181 serves as the catalytic Nucleophile. Position 183 (Asn-183) interacts with substrate. FMN is bound by residues Lys-218 and Ser-246. Position 247-248 (Asn-247–Thr-248) interacts with substrate. FMN is bound by residues Gly-268, Gly-297, and Tyr-318 to Ser-319.

The protein belongs to the dihydroorotate dehydrogenase family. Type 2 subfamily. Monomer. FMN is required as a cofactor.

It is found in the cell membrane. The enzyme catalyses (S)-dihydroorotate + a quinone = orotate + a quinol. It functions in the pathway pyrimidine metabolism; UMP biosynthesis via de novo pathway; orotate from (S)-dihydroorotate (quinone route): step 1/1. Its function is as follows. Catalyzes the conversion of dihydroorotate to orotate with quinone as electron acceptor. The chain is Dihydroorotate dehydrogenase (quinone) from Sphingopyxis alaskensis (strain DSM 13593 / LMG 18877 / RB2256) (Sphingomonas alaskensis).